Here is a 242-residue protein sequence, read N- to C-terminus: Uridylate kinase (242 aa).

Lys16 to Gly19 provides a ligand contact to ATP. The involved in allosteric activation by GTP stretch occupies residues Gly24–Gly29. Gly58 contributes to the UMP binding site. ATP is bound by residues Gly59 and Arg63. Residues Asp78 and Thr139–Thr146 each bind UMP. The ATP site is built by Thr166, Tyr172, and Asp175.

The protein belongs to the UMP kinase family. Homohexamer.

The protein resides in the cytoplasm. It carries out the reaction UMP + ATP = UDP + ADP. The protein operates within pyrimidine metabolism; CTP biosynthesis via de novo pathway; UDP from UMP (UMPK route): step 1/1. Its activity is regulated as follows. Allosterically activated by GTP. Inhibited by UTP. In terms of biological role, catalyzes the reversible phosphorylation of UMP to UDP. The chain is Uridylate kinase from Roseobacter denitrificans (strain ATCC 33942 / OCh 114) (Erythrobacter sp. (strain OCh 114)).